A 292-amino-acid chain; its full sequence is Syntenin-2 (292 aa).

2 PDZ domains span residues E108 to R187 and T192 to V267.

Monomer and homodimer. Interacts with SDCBP. Interacts with TM4SF1.

It is found in the cytoplasm. The protein localises to the nucleus. Its subcellular location is the nucleolus. The protein resides in the nucleoplasm. It localises to the cell membrane. It is found in the nucleus speckle. Its function is as follows. Binds phosphatidylinositol 4,5-bisphosphate (PIP2). May play a role in the organization of nuclear PIP2, cell division and cell survival. In Mus musculus (Mouse), this protein is Syntenin-2 (Sdcbp2).